The primary structure comprises 314 residues: Ribonuclease Z (314 aa).

His-61, His-63, Asp-65, His-66, His-139, Asp-211, and His-269 together coordinate Zn(2+). The active-site Proton acceptor is the Asp-65.

Belongs to the RNase Z family. Homodimer. Requires Zn(2+) as cofactor.

The enzyme catalyses Endonucleolytic cleavage of RNA, removing extra 3' nucleotides from tRNA precursor, generating 3' termini of tRNAs. A 3'-hydroxy group is left at the tRNA terminus and a 5'-phosphoryl group is left at the trailer molecule.. In terms of biological role, zinc phosphodiesterase, which displays some tRNA 3'-processing endonuclease activity. Probably involved in tRNA maturation, by removing a 3'-trailer from precursor tRNA. This chain is Ribonuclease Z, found in Gemmatimonas aurantiaca (strain DSM 14586 / JCM 11422 / NBRC 100505 / T-27).